Consider the following 208-residue polypeptide: N-(5'-phosphoribosyl)anthranilate isomerase (208 aa).

This sequence belongs to the TrpF family.

It carries out the reaction N-(5-phospho-beta-D-ribosyl)anthranilate = 1-(2-carboxyphenylamino)-1-deoxy-D-ribulose 5-phosphate. It participates in amino-acid biosynthesis; L-tryptophan biosynthesis; L-tryptophan from chorismate: step 3/5. The protein is N-(5'-phosphoribosyl)anthranilate isomerase of Neisseria meningitidis serogroup B (strain ATCC BAA-335 / MC58).